Here is a 258-residue protein sequence, read N- to C-terminus: AACILLFPRFLLTAVMLWLLDFLCIRKKMLTMPTAEEAAGAGEGPPPDDPPVCVSDSNRMFTLESLKAVWHGQKLDFFKSAHVGSPAPNPEVIQLDGQKRLRILDFARGKRPLILNFGSCTUPPFMARLRSFRRLAADFVDIADFLLVYIEEAHPSDGWVSSDAAYSIPKHQCLQDRLRAAQLMREGAPDCPLAVDTMDNASSAAYGAYFERLYVIQEEKVMYQGGRGPEGYKISELRTWLDQYKTRLQSPGAVVIQV.

A helical; Signal-anchor for type II membrane protein transmembrane segment spans residues 1–20 (AACILLFPRFLLTAVMLWLL). The Extracellular portion of the chain corresponds to 21 to 258 (DFLCIRKKML…QSPGAVVIQV (238 aa)). Residue Sec-122 is part of the active site. Position 122 (Sec-122) is a non-standard amino acid, selenocysteine.

The protein belongs to the iodothyronine deiodinase family. Monomer. Homodimer. May undergo minor heretodimerization with DIO1 and DIO2.

It localises to the cell membrane. It is found in the endosome membrane. The enzyme catalyses 3,3',5'-triiodo-L-thyronine + iodide + A + H(+) = L-thyroxine + AH2. It carries out the reaction 3,3'-diiodo-L-thyronine + iodide + A + H(+) = 3,3',5-triiodo-L-thyronine + AH2. The catalysed reaction is 3-iodo-L-thyronine + iodide + A + H(+) = 3,5-diiodo-L-thyronine + AH2. It catalyses the reaction L-thyronine + iodide + A + H(+) = 3-iodo-L-thyronine + AH2. The enzyme catalyses 3',5'-diiodo-L-thyronine + iodide + A + H(+) = 3,3',5'-triiodo-L-thyronine + AH2. It carries out the reaction 3'-iodo-L-thyronine + iodide + A + H(+) = 3,3'-diiodo-L-thyronine + AH2. The catalysed reaction is 3,3',5'-triiodothyronamine + iodide + A + H(+) = 3,3',5,5'-tetraiodothyronamine + AH2. It catalyses the reaction 3',5'-diiodothyronamine + iodide + A + H(+) = 3,3',5'-triiodothyronamine + AH2. The enzyme catalyses 3,3'-diiodothyronamine + iodide + A + H(+) = 3,3',5-triiodothyronamine + AH2. It carries out the reaction 3-iodothyronamine + iodide + A + H(+) = 3,5-diiodothyronamine + AH2. The catalysed reaction is 3'-iodothyronamine + iodide + A + H(+) = 3,3'-diiodothyronamine + AH2. It catalyses the reaction thyronamine + iodide + A + H(+) = 3-iodothyronamine + AH2. In terms of biological role, plays a crucial role in the metabolism of thyroid hormones (TH) and has specific roles in TH activation and inactivation by deiodination. Catalyzes the deiodination of L-thyroxine (T4) to 3,3',5'-triiodothyronine (rT3) and 3,5,3'-triiodothyronine (T3) to 3,3'-diiodothyronine (3,3'-T2) via inner-ring deiodination (IRD). Catalyzes the deiodination of rT3 to 3',5'-diiodothyronine (3',5'-T2), 3,3'-T2 to 3'-monoiodothyronine (3'-T1) and 3,5-diiodothyronine (3,5-T2) to 3-monoiodothyronine (3-T1) via IRD. Catalyzes the deiodination of 3-T1 to L-thyronine (T0) via outer-ring deiodination (ORD). Catalyzes the tyrosyl ring deiodinations of 3,3',5,5'-tetraiodothyronamine, 3,3',5'-triiodothyronamine, 3,5,3'-triiodothyronamine, 3,5-diiodothyronamine, 3,3'-diiodothyronamine and 3-iodothyronamine. The polypeptide is Thyroxine 5-deiodinase (DIO3) (Gallus gallus (Chicken)).